A 578-amino-acid chain; its full sequence is Proline--tRNA ligase (578 aa).

The protein belongs to the class-II aminoacyl-tRNA synthetase family. ProS type 1 subfamily. As to quaternary structure, homodimer.

It localises to the cytoplasm. It catalyses the reaction tRNA(Pro) + L-proline + ATP = L-prolyl-tRNA(Pro) + AMP + diphosphate. In terms of biological role, catalyzes the attachment of proline to tRNA(Pro) in a two-step reaction: proline is first activated by ATP to form Pro-AMP and then transferred to the acceptor end of tRNA(Pro). As ProRS can inadvertently accommodate and process non-cognate amino acids such as alanine and cysteine, to avoid such errors it has two additional distinct editing activities against alanine. One activity is designated as 'pretransfer' editing and involves the tRNA(Pro)-independent hydrolysis of activated Ala-AMP. The other activity is designated 'posttransfer' editing and involves deacylation of mischarged Ala-tRNA(Pro). The misacylated Cys-tRNA(Pro) is not edited by ProRS. The protein is Proline--tRNA ligase of Burkholderia ambifaria (strain ATCC BAA-244 / DSM 16087 / CCUG 44356 / LMG 19182 / AMMD) (Burkholderia cepacia (strain AMMD)).